We begin with the raw amino-acid sequence, 142 residues long: Small heat shock protein IbpB (142 aa).

One can recognise a sHSP domain in the interval alanine 26 to arginine 137.

The protein belongs to the small heat shock protein (HSP20) family. Homodimer. Forms homomultimers of about 100-150 subunits at optimal growth temperatures. Conformation changes to oligomers at high temperatures or high ionic concentrations. The decrease in size of the multimers is accompanied by an increase in chaperone activity.

The protein resides in the cytoplasm. Its function is as follows. Associates with aggregated proteins, together with IbpA, to stabilize and protect them from irreversible denaturation and extensive proteolysis during heat shock and oxidative stress. Aggregated proteins bound to the IbpAB complex are more efficiently refolded and reactivated by the ATP-dependent chaperone systems ClpB and DnaK/DnaJ/GrpE. Its activity is ATP-independent. The polypeptide is Small heat shock protein IbpB (Shigella flexneri serotype 5b (strain 8401)).